The chain runs to 425 residues: Histone-binding protein RBBP4 (425 aa).

Alanine 2 is modified (N-acetylalanine). An N6-acetyllysine; alternate modification is found at lysine 4. Lysine 4 is covalently cross-linked (Glycyl lysine isopeptide (Lys-Gly) (interchain with G-Cter in SUMO2); alternate). Lysine 4 participates in a covalent cross-link: Glycyl lysine isopeptide (Lys-Gly) (interchain with G-Cter in ubiquitin); alternate. WD repeat units follow at residues 32-125 (YDLV…NHEG), 126-175 (EVNR…RLRG), 176-223 (HQKE…KTIF), 225-270 (GHTA…HSVD), 271-314 (AHTA…HSFE), 315-371 (SHKD…FIHG), and 372-404 (GHTAKISDFSWNPNEPWVICSVSEDNIMQVWQM). Residue serine 110 is modified to Phosphoserine. Lysine 160 is modified (N6-acetyllysine; alternate). Residue lysine 160 forms a Glycyl lysine isopeptide (Lys-Gly) (interchain with G-Cter in SUMO2); alternate linkage. Serine 355 is modified (phosphoserine).

Belongs to the WD repeat RBAP46/RBAP48/MSI1 family. In terms of assembly, binds directly to helix 1 of the histone fold of histone H4, a region that is not accessible when H4 is in chromatin. Subunit of the chromatin assembly factor 1 (CAF-1) complex, which is composed of RBBP4, CHAF1B and CHAF1A. Subunit of the core histone deacetylase (HDAC) complex, which is composed of HDAC1, HDAC2, RBBP4 and RBBP7. The core HDAC complex associates with SIN3A, ARID4B/SAP180, SAP18, SAP30, SAP130, SUDS3/SAP45 and possibly ARID4A/RBP1 and ING1 to form the SIN3 HDAC complex. Component of the nucleosome remodeling and deacetylase (NuRD) repressor complex, composed of core proteins MTA1, MTA2, MTA3, RBBP4, RBBP7, HDAC1, HDAC2, MBD2, MBD3, and peripherally associated proteins CDK2AP1, CDK2AP2, GATAD2A, GATAD2B, CHD3, CHD4 and CHD5. The exact stoichiometry of the NuRD complex is unknown, and some subunits such as MBD2 and MBD3, GATAD2A and GATAD2B, and CHD3, CHD4 and CHD5 define mutually exclusive NuRD complexes. Interacts with ZNF512B; the interaction is direct and may play a role in repressing gene expression. The NuRD complex may also interact with MBD3L1 and MBD3L2. Component of the PRC2 complex, which consists of the core subunits EED, EZH1 or EZH2, SUZ12, and RBBP4, and various combinations of accessory subunits including AEBP2, JARID2, PHF19, MTF2 and EPOP. Forms a monomeric PRC2.2 (class 2) complex consisting of at least SUZ12, RBBP4, AEBP2 and JARID2. Forms a dimeric PRC2.1 (class 1, PRC-PCL) complex consisting of at least SUZ12, RBBP4, and PHF19; PHF19 stabilizes the dimeric structure which enhances PRC2 interaction with chromatin. Component of the NURF-1 ISWI chromatin remodeling complex (also called the nucleosome-remodeling factor (NURF) complex) at least composed of SMARCA1 (isoform 2), BPTF, RBBP4 and RBBP7. Within the complex interacts with isoform 2 of SMARCA1. Component of the BPFT-SMARCA1 complex at least composed of SMARCA1 (isoform 1), BPFT, RBBP4 and RBBP7; the complex is catalytically inactive and does not remodel chromatin. Within the complex interacts with isoform 1 of SMARCA1. Interacts with the ISWI chromatin remodeling complex component SMARCA5; the interaction is direct. Interacts with the viral protein-binding domain of the retinoblastoma protein (RB1). Component of the DREAM complex (also named LINC complex) at least composed of E2F4, E2F5, LIN9, LIN37, LIN52, LIN54, MYBL1, MYBL2, RBL1, RBL2, RBBP4, TFDP1 and TFDP2. The complex exists in quiescent cells where it represses cell cycle-dependent genes. It dissociates in S phase when LIN9, LIN37, LIN52 and LIN54 form a subcomplex that binds to MYBL2. Found in a complex composed of at least SINHCAF, SIN3A, HDAC1, SAP30, RBBP4, OGT and TET1. Interacts with ZNF827; the interaction is direct and recruits RBBP4 to telomeres. Interacts with MTA1; the interaction is direct and mutually exclusive with binding histone H4. Interacts with ARMC12 (via ARM domains). Interacts with BRCA1. Interacts with CDK2AP1. Interacts with CREBBP, and this interaction may be enhanced by the binding of phosphorylated CREB1 to CREBBP. Interacts with ERCC6. Interacts with HDAC7. Interacts with PHF6. Interacts with PWWP2B. Interacts with SPEN/MINT. Interacts with SUV39H1.

It is found in the nucleus. The protein localises to the chromosome. The protein resides in the telomere. Core histone-binding subunit that may target chromatin assembly factors, chromatin remodeling factors and histone deacetylases to their histone substrates in a manner that is regulated by nucleosomal DNA. Component of the chromatin assembly factor 1 (CAF-1) complex, which is required for chromatin assembly following DNA replication and DNA repair. Component of the core histone deacetylase (HDAC) complex, which promotes histone deacetylation and consequent transcriptional repression. Component of the nucleosome remodeling and histone deacetylase complex (the NuRD complex), which promotes transcriptional repression by histone deacetylation and nucleosome remodeling. Component of the PRC2 complex, which promotes repression of homeotic genes during development. Component of the NURF (nucleosome remodeling factor) complex. The sequence is that of Histone-binding protein RBBP4 (RBBP4) from Pongo abelii (Sumatran orangutan).